A 254-amino-acid polypeptide reads, in one-letter code: Thiazole synthase (254 aa).

K95 functions as the Schiff-base intermediate with DXP in the catalytic mechanism. 1-deoxy-D-xylulose 5-phosphate-binding positions include G156, 182 to 183, and 204 to 205; these read AG and NT.

It belongs to the ThiG family. Homotetramer. Forms heterodimers with either ThiH or ThiS.

The protein resides in the cytoplasm. It catalyses the reaction [ThiS sulfur-carrier protein]-C-terminal-Gly-aminoethanethioate + 2-iminoacetate + 1-deoxy-D-xylulose 5-phosphate = [ThiS sulfur-carrier protein]-C-terminal Gly-Gly + 2-[(2R,5Z)-2-carboxy-4-methylthiazol-5(2H)-ylidene]ethyl phosphate + 2 H2O + H(+). It functions in the pathway cofactor biosynthesis; thiamine diphosphate biosynthesis. Catalyzes the rearrangement of 1-deoxy-D-xylulose 5-phosphate (DXP) to produce the thiazole phosphate moiety of thiamine. Sulfur is provided by the thiocarboxylate moiety of the carrier protein ThiS. In vitro, sulfur can be provided by H(2)S. This Shewanella sp. (strain W3-18-1) protein is Thiazole synthase.